A 164-amino-acid chain; its full sequence is Thiol peroxidase (164 aa).

The region spanning 18–163 (INEGDFAPDF…FDAALAAYKN (146 aa)) is the Thioredoxin domain. Cys-60 (cysteine sulfenic acid (-SOH) intermediate) is an active-site residue. Cysteines 60 and 93 form a disulfide.

The protein belongs to the peroxiredoxin family. Tpx subfamily. As to quaternary structure, homodimer.

It carries out the reaction a hydroperoxide + [thioredoxin]-dithiol = an alcohol + [thioredoxin]-disulfide + H2O. Its function is as follows. Thiol-specific peroxidase that catalyzes the reduction of hydrogen peroxide and organic hydroperoxides to water and alcohols, respectively. Plays a role in cell protection against oxidative stress by detoxifying peroxides. This chain is Thiol peroxidase, found in Staphylococcus aureus (strain COL).